Reading from the N-terminus, the 118-residue chain is Autophagy-related protein 8D (118 aa).

Glycine 118 is lipidated: Phosphatidylethanolamine amidated glycine.

It belongs to the ATG8 family. In terms of assembly, interacts with ATG4. In terms of processing, the C-terminal Gly is amidated with phosphatidylethanolamine by an activating system similar to that for ubiquitin.

It localises to the cytoplasmic vesicle. It is found in the autophagosome membrane. The protein resides in the vacuole membrane. The protein localises to the cytoplasm. Its subcellular location is the cytoskeleton. Ubiquitin-like modifier involved in autophagosomes formation. May mediate the delivery of the autophagosomes to the vacuole via the microtubule cytoskeleton. The chain is Autophagy-related protein 8D (ATG8D) from Oryza sativa subsp. japonica (Rice).